The primary structure comprises 88 residues: HssA/B-like protein 6 (88 aa).

Positions 1 to 22 (MSILSALTSISNPMKSSNSNVA) are disordered.

It belongs to the hssA/B family.

This chain is HssA/B-like protein 6 (hssl6), found in Dictyostelium discoideum (Social amoeba).